Consider the following 534-residue polypeptide: uncharacterized protein (534 aa).

Disordered regions lie at residues 1–150 (MSDS…DIPP), 252–284 (RRFR…NGQP), and 383–434 (WKSQ…PSLP). The segment covering 8 to 67 (SQREDNYSRDRRSRFTEDSYSRRDSQRSGNEAPRESRYYRKEEHLQERSRSRSPARDSRW) has biased composition (basic and acidic residues). A compositionally biased stretch (polar residues) spans 102–113 (SLQSTKATSSRT). Pro residues predominate over residues 130–141 (PSAPAPPLPPSS). Basic and acidic residues predominate over residues 252-262 (RRFRRREDNER). The span at 263–272 (NNSNSPRNFS) shows a compositional bias: low complexity. The segment covering 393-408 (NQGNRAYNPPNRNQAF) has biased composition (polar residues).

This is an uncharacterized protein from Schizosaccharomyces pombe (strain 972 / ATCC 24843) (Fission yeast).